We begin with the raw amino-acid sequence, 224 residues long: Biotin transport ATP-binding protein BioM (224 aa).

Residues Ile-3–Ala-224 enclose the ABC transporter domain. Gly-34–Thr-41 contributes to the ATP binding site.

The protein belongs to the ABC transporter superfamily. Part of a biotin transporter complex composed of BioM, BioN and BioY.

It localises to the cell inner membrane. Functionally, involved in biotin uptake. The sequence is that of Biotin transport ATP-binding protein BioM (bioM) from Rhizobium etli (strain ATCC 51251 / DSM 11541 / JCM 21823 / NBRC 15573 / CFN 42).